A 65-amino-acid polypeptide reads, in one-letter code: Small vasohibin-binding protein (65 aa).

Basic and acidic residues predominate over residues 1–22 (MEPACRKDKQKQQTPTRGDRTK). The segment at 1–30 (MEPACRKDKQKQQTPTRGDRTKQKTAQQEL) is disordered. Positions 31–51 (KQRQRAEIYALNKVMTELEQQ) form a coiled coil.

This sequence belongs to the SVBP family.

Its subcellular location is the cytoplasm. It is found in the secreted. It localises to the cytoskeleton. Enhances the tyrosine carboxypeptidase activity of vash1 and vash2, thereby promoting the removal of the C-terminal tyrosine residue of alpha-tubulin. Also required to enhance the solubility and secretion of vash1 and vash2. May play a role in axon and excitatory synapse formation. The protein is Small vasohibin-binding protein of Danio rerio (Zebrafish).